Reading from the N-terminus, the 245-residue chain is Adapter protein MecA (245 aa).

Belongs to the MecA family. Homodimer.

Enables the recognition and targeting of unfolded and aggregated proteins to the ClpC protease or to other proteins involved in proteolysis. The protein is Adapter protein MecA of Streptococcus pneumoniae serotype 4 (strain ATCC BAA-334 / TIGR4).